Here is a 361-residue protein sequence, read N- to C-terminus: Mannose-1-phosphate guanyltransferase (361 aa).

T153 bears the Phosphothreonine mark. K244 participates in a covalent cross-link: Glycyl lysine isopeptide (Lys-Gly) (interchain with G-Cter in ubiquitin).

It belongs to the transferase hexapeptide repeat family.

The protein resides in the cytoplasm. It catalyses the reaction alpha-D-mannose 1-phosphate + GTP + H(+) = GDP-alpha-D-mannose + diphosphate. Its pathway is nucleotide-sugar biosynthesis; GDP-alpha-D-mannose biosynthesis; GDP-alpha-D-mannose from alpha-D-mannose 1-phosphate (GTP route): step 1/1. Functionally, involved in cell wall synthesis where it is required for glycosylation. Involved in cell cycle progression through cell-size checkpoint. This is Mannose-1-phosphate guanyltransferase (PSA1) from Saccharomyces cerevisiae (strain ATCC 204508 / S288c) (Baker's yeast).